We begin with the raw amino-acid sequence, 255 residues long: Acetyl-coenzyme A carboxylase carboxyl transferase subunit alpha (255 aa).

The CoA carboxyltransferase C-terminal domain maps to 1–235 (MNIAKIVREA…KKELQTELAR (235 aa)).

It belongs to the AccA family. Acetyl-CoA carboxylase is a heterohexamer composed of biotin carboxyl carrier protein (AccB), biotin carboxylase (AccC) and two subunits each of ACCase subunit alpha (AccA) and ACCase subunit beta (AccD).

The protein localises to the cytoplasm. It catalyses the reaction N(6)-carboxybiotinyl-L-lysyl-[protein] + acetyl-CoA = N(6)-biotinyl-L-lysyl-[protein] + malonyl-CoA. The protein operates within lipid metabolism; malonyl-CoA biosynthesis; malonyl-CoA from acetyl-CoA: step 1/1. Functionally, component of the acetyl coenzyme A carboxylase (ACC) complex. First, biotin carboxylase catalyzes the carboxylation of biotin on its carrier protein (BCCP) and then the CO(2) group is transferred by the carboxyltransferase to acetyl-CoA to form malonyl-CoA. This Streptococcus pneumoniae serotype 19F (strain G54) protein is Acetyl-coenzyme A carboxylase carboxyl transferase subunit alpha.